The following is a 452-amino-acid chain: Probable glycine dehydrogenase (decarboxylating) subunit 1 (452 aa).

Belongs to the GcvP family. N-terminal subunit subfamily. The glycine cleavage system is composed of four proteins: P, T, L and H. In this organism, the P 'protein' is a heterodimer of two subunits.

It carries out the reaction N(6)-[(R)-lipoyl]-L-lysyl-[glycine-cleavage complex H protein] + glycine + H(+) = N(6)-[(R)-S(8)-aminomethyldihydrolipoyl]-L-lysyl-[glycine-cleavage complex H protein] + CO2. Functionally, the glycine cleavage system catalyzes the degradation of glycine. The P protein binds the alpha-amino group of glycine through its pyridoxal phosphate cofactor; CO(2) is released and the remaining methylamine moiety is then transferred to the lipoamide cofactor of the H protein. This chain is Probable glycine dehydrogenase (decarboxylating) subunit 1, found in Novosphingobium aromaticivorans (strain ATCC 700278 / DSM 12444 / CCUG 56034 / CIP 105152 / NBRC 16084 / F199).